The sequence spans 242 residues: Octanoyltransferase (242 aa).

The BPL/LPL catalytic domain maps to 31-206; the sequence is SQTTDEIWFL…LFLKNFGYNQ (176 aa). Residues 70 to 77, 137 to 139, and 150 to 152 each bind substrate; these read RGGQVTYH, SIG, and GLA. The active-site Acyl-thioester intermediate is Cys168.

This sequence belongs to the LipB family.

The protein resides in the cytoplasm. The catalysed reaction is octanoyl-[ACP] + L-lysyl-[protein] = N(6)-octanoyl-L-lysyl-[protein] + holo-[ACP] + H(+). It participates in protein modification; protein lipoylation via endogenous pathway; protein N(6)-(lipoyl)lysine from octanoyl-[acyl-carrier-protein]: step 1/2. In terms of biological role, catalyzes the transfer of endogenously produced octanoic acid from octanoyl-acyl-carrier-protein onto the lipoyl domains of lipoate-dependent enzymes. Lipoyl-ACP can also act as a substrate although octanoyl-ACP is likely to be the physiological substrate. The polypeptide is Octanoyltransferase (Coxiella burnetii (strain CbuK_Q154) (Coxiella burnetii (strain Q154))).